The following is a 629-amino-acid chain: 1-deoxy-D-xylulose-5-phosphate synthase (629 aa).

Thiamine diphosphate-binding positions include H79 and 119-121 (SHA). Residue D150 participates in Mg(2+) binding. Residues 151 to 152 (GS), N180, Y292, and E377 each bind thiamine diphosphate. N180 contacts Mg(2+).

The protein belongs to the transketolase family. DXPS subfamily. Homodimer. The cofactor is Mg(2+). Thiamine diphosphate is required as a cofactor.

The enzyme catalyses D-glyceraldehyde 3-phosphate + pyruvate + H(+) = 1-deoxy-D-xylulose 5-phosphate + CO2. It participates in metabolic intermediate biosynthesis; 1-deoxy-D-xylulose 5-phosphate biosynthesis; 1-deoxy-D-xylulose 5-phosphate from D-glyceraldehyde 3-phosphate and pyruvate: step 1/1. Catalyzes the acyloin condensation reaction between C atoms 2 and 3 of pyruvate and glyceraldehyde 3-phosphate to yield 1-deoxy-D-xylulose-5-phosphate (DXP). This Tropheryma whipplei (strain TW08/27) (Whipple's bacillus) protein is 1-deoxy-D-xylulose-5-phosphate synthase.